Here is a 252-residue protein sequence, read N- to C-terminus: MLLAVDIGNTSTALGLFSGEELIAHFRIHTDRMRMESEYRVILKNLFALEDLPPPKAALLASVVPPVEREMKRAIERLFGVEARVVEAADTGLEVLIDNPREAGADRLVNAVGALAYPSPTGRYIVVDFGTATTFDLVEAPNRYLGGAIAIGPQTAADALAQRTAKLPRIDLTPPKAAVGKNTLEALRSGLVLGYAALVEGMVRRFKEEAGEALVIATGGFAETLRPLCPCFDVVDEDLTLKGLLRIHLGRG.

6-13 (DIGNTSTA) lines the ATP pocket. 104-107 (GADR) serves as a coordination point for substrate. Asp106 (proton acceptor) is an active-site residue. Asp128 is a binding site for K(+). Thr131 serves as a coordination point for ATP. A substrate-binding site is contributed by Thr183.

This sequence belongs to the type III pantothenate kinase family. As to quaternary structure, homodimer. NH4(+) is required as a cofactor. The cofactor is K(+).

It localises to the cytoplasm. The catalysed reaction is (R)-pantothenate + ATP = (R)-4'-phosphopantothenate + ADP + H(+). It functions in the pathway cofactor biosynthesis; coenzyme A biosynthesis; CoA from (R)-pantothenate: step 1/5. Catalyzes the phosphorylation of pantothenate (Pan), the first step in CoA biosynthesis. This is Type III pantothenate kinase from Thermus thermophilus (strain ATCC 27634 / DSM 579 / HB8).